Consider the following 223-residue polypeptide: Phosphoribosylformylglycinamidine synthase subunit PurQ (223 aa).

The Glutamine amidotransferase type-1 domain occupies 2–223 (KTAIIQLPGL…FQSALELAKG (222 aa)). The Nucleophile role is filled by Cys-86. Active-site residues include His-196 and Glu-198.

As to quaternary structure, part of the FGAM synthase complex composed of 1 PurL, 1 PurQ and 2 PurS subunits.

The protein localises to the cytoplasm. The catalysed reaction is N(2)-formyl-N(1)-(5-phospho-beta-D-ribosyl)glycinamide + L-glutamine + ATP + H2O = 2-formamido-N(1)-(5-O-phospho-beta-D-ribosyl)acetamidine + L-glutamate + ADP + phosphate + H(+). The enzyme catalyses L-glutamine + H2O = L-glutamate + NH4(+). The protein operates within purine metabolism; IMP biosynthesis via de novo pathway; 5-amino-1-(5-phospho-D-ribosyl)imidazole from N(2)-formyl-N(1)-(5-phospho-D-ribosyl)glycinamide: step 1/2. In terms of biological role, part of the phosphoribosylformylglycinamidine synthase complex involved in the purines biosynthetic pathway. Catalyzes the ATP-dependent conversion of formylglycinamide ribonucleotide (FGAR) and glutamine to yield formylglycinamidine ribonucleotide (FGAM) and glutamate. The FGAM synthase complex is composed of three subunits. PurQ produces an ammonia molecule by converting glutamine to glutamate. PurL transfers the ammonia molecule to FGAR to form FGAM in an ATP-dependent manner. PurS interacts with PurQ and PurL and is thought to assist in the transfer of the ammonia molecule from PurQ to PurL. This chain is Phosphoribosylformylglycinamidine synthase subunit PurQ, found in Bartonella henselae (strain ATCC 49882 / DSM 28221 / CCUG 30454 / Houston 1) (Rochalimaea henselae).